The sequence spans 168 residues: Ribosome maturation factor RimM (168 aa).

A PRC barrel domain is found at 94–167 (DGNYYHHQII…KVIIELLDGL (74 aa)).

It belongs to the RimM family. Binds ribosomal protein uS19.

It localises to the cytoplasm. In terms of biological role, an accessory protein needed during the final step in the assembly of 30S ribosomal subunit, possibly for assembly of the head region. Essential for efficient processing of 16S rRNA. May be needed both before and after RbfA during the maturation of 16S rRNA. It has affinity for free ribosomal 30S subunits but not for 70S ribosomes. The protein is Ribosome maturation factor RimM of Ligilactobacillus salivarius (strain UCC118) (Lactobacillus salivarius).